The primary structure comprises 374 residues: 3-isopropylmalate dehydrogenase (374 aa).

An NAD(+)-binding site is contributed by 83-96 (GPKWDNLPPEIRPE). Residues Arg-104, Arg-114, Arg-142, and Asp-231 each coordinate substrate. Asp-231, Asp-255, and Asp-259 together coordinate Mg(2+). NAD(+) is bound at residue 288–300 (GSAPDIAGQNKAN).

This sequence belongs to the isocitrate and isopropylmalate dehydrogenases family. LeuB type 1 subfamily. As to quaternary structure, homodimer. Requires Mg(2+) as cofactor. Mn(2+) serves as cofactor.

Its subcellular location is the cytoplasm. It catalyses the reaction (2R,3S)-3-isopropylmalate + NAD(+) = 4-methyl-2-oxopentanoate + CO2 + NADH. It functions in the pathway amino-acid biosynthesis; L-leucine biosynthesis; L-leucine from 3-methyl-2-oxobutanoate: step 3/4. Functionally, catalyzes the oxidation of 3-carboxy-2-hydroxy-4-methylpentanoate (3-isopropylmalate) to 3-carboxy-4-methyl-2-oxopentanoate. The product decarboxylates to 4-methyl-2 oxopentanoate. The protein is 3-isopropylmalate dehydrogenase of Carboxydothermus hydrogenoformans (strain ATCC BAA-161 / DSM 6008 / Z-2901).